The sequence spans 144 residues: Ribosome-binding factor A (144 aa).

The disordered stretch occupies residues 120 to 144; that stretch reads DKRRMAEAGREEDEAAPDDTTEDKA. Residues 129 to 144 show a composition bias toward acidic residues; it reads REEDEAAPDDTTEDKA.

It belongs to the RbfA family. In terms of assembly, monomer. Binds 30S ribosomal subunits, but not 50S ribosomal subunits or 70S ribosomes.

The protein resides in the cytoplasm. Its function is as follows. One of several proteins that assist in the late maturation steps of the functional core of the 30S ribosomal subunit. Associates with free 30S ribosomal subunits (but not with 30S subunits that are part of 70S ribosomes or polysomes). Required for efficient processing of 16S rRNA. May interact with the 5'-terminal helix region of 16S rRNA. In Aeromonas salmonicida (strain A449), this protein is Ribosome-binding factor A.